A 503-amino-acid chain; its full sequence is Potassium voltage-gated channel subfamily V member 1 (503 aa).

2 disordered regions span residues 1-20 and 171-192; these read MDLS…DSGS and KKDT…QGPC. Over 3 to 213 the chain is Cytoplasmic; it reads LSPRNRPLLD…EKPGSSTAAR (211 aa). Positions 10-20 are enriched in low complexity; it reads LLDSSSLDSGS. Positions 171 to 184 are enriched in basic and acidic residues; the sequence is KKDTDDQESQHESE. A helical transmembrane segment spans residues 214–234; it reads IFGVISIIFVAVSIVNMALMS. Over 235-241 the chain is Extracellular; that stretch reads AELSWLN. Residues 242 to 262 traverse the membrane as a helical segment; it reads LQLLEILEYVCISWFTGEFIL. The Cytoplasmic segment spans residues 263–279; sequence RFLCVKDRCHFLRKVPN. Residues 280 to 300 traverse the membrane as a helical segment; sequence IIDLLAILPFYITLLVESLSG. Topologically, residues 301-312 are extracellular; that stretch reads SHTTQELENVGR. Residues 313 to 334 traverse the membrane as a helical; Voltage-sensor segment; sequence LVQVLRLLRALRMLKLGRHSTG. At 335 to 348 the chain is on the cytoplasmic side; sequence LRSLGMTITQCYEE. Residues 349 to 369 form a helical membrane-spanning segment; it reads VGLLLLFLSVGISIFSTIEYF. Positions 395–400 match the Selectivity filter motif; sequence TVGYGD. The helical transmembrane segment at 410–430 threads the bilayer; sequence IVAFMCILSGILVLALPIAII. The Cytoplasmic segment spans residues 431–503; that stretch reads NDRFSACYFT…RSSGGDDFWF (73 aa).

This sequence belongs to the potassium channel family. V (TC 1.A.1.2) subfamily. Kv8.1/KCNV1 sub-subfamily. As to quaternary structure, heteromultimer with KCNB1 and KCNB2. Interacts with KCNC4 and KCND1. As to expression, detected in brain, in neocortex, olfactory tubercle, hippocampus, dentate gyrus, piriform cortex and amygdala. Detected in Purkinje cells and granular cells of the cerebellum, in hippocampal CA4 neurons and neocortex pyramidal cells.

The protein resides in the cell membrane. Functionally, potassium channel subunit that does not form functional channels by itself. Modulates KCNB1 and KCNB2 channel activity by shifting the threshold for inactivation to more negative values and by slowing the rate of inactivation. Can down-regulate the channel activity of KCNB1, KCNB2, KCNC4 and KCND1, possibly by trapping them in intracellular membranes. The protein is Potassium voltage-gated channel subfamily V member 1 (Kcnv1) of Rattus norvegicus (Rat).